Consider the following 110-residue polypeptide: Large ribosomal subunit protein uL22 (110 aa).

The protein belongs to the universal ribosomal protein uL22 family. As to quaternary structure, part of the 50S ribosomal subunit.

Functionally, this protein binds specifically to 23S rRNA; its binding is stimulated by other ribosomal proteins, e.g. L4, L17, and L20. It is important during the early stages of 50S assembly. It makes multiple contacts with different domains of the 23S rRNA in the assembled 50S subunit and ribosome. Its function is as follows. The globular domain of the protein is located near the polypeptide exit tunnel on the outside of the subunit, while an extended beta-hairpin is found that lines the wall of the exit tunnel in the center of the 70S ribosome. This Janthinobacterium sp. (strain Marseille) (Minibacterium massiliensis) protein is Large ribosomal subunit protein uL22.